A 175-amino-acid polypeptide reads, in one-letter code: NADH-ubiquinone oxidoreductase chain 6 (175 aa).

Transmembrane regions (helical) follow at residues 1 to 21, 26 to 46, 47 to 67, 87 to 107, and 152 to 172; these read MMYMVFLLSVAFVISFIGFSS, IYGGLGLIVGGGVGCGIVMGL, GGSFLGLMVFLVYLGGMLVVF, VILSALFVGLLVEVAMIVWMI, and WLVILAGWSLFVSIFIVIEIT.

This sequence belongs to the complex I subunit 6 family.

Its subcellular location is the mitochondrion membrane. The enzyme catalyses a ubiquinone + NADH + 5 H(+)(in) = a ubiquinol + NAD(+) + 4 H(+)(out). Its function is as follows. Core subunit of the mitochondrial membrane respiratory chain NADH dehydrogenase (Complex I) that is believed to belong to the minimal assembly required for catalysis. Complex I functions in the transfer of electrons from NADH to the respiratory chain. The immediate electron acceptor for the enzyme is believed to be ubiquinone. This chain is NADH-ubiquinone oxidoreductase chain 6 (MT-ND6), found in Dasypus novemcinctus (Nine-banded armadillo).